The sequence spans 1427 residues: DNA-directed RNA polymerase subunit beta' (1427 aa).

Zn(2+) contacts are provided by Cys66, Cys68, Cys81, and Cys84. The Mg(2+) site is built by Asp472, Asp474, and Asp476. 4 residues coordinate Zn(2+): Cys815, Cys889, Cys896, and Cys899.

The protein belongs to the RNA polymerase beta' chain family. In terms of assembly, the RNAP catalytic core consists of 2 alpha, 1 beta, 1 beta' and 1 omega subunit. When a sigma factor is associated with the core the holoenzyme is formed, which can initiate transcription. The cofactor is Mg(2+). Zn(2+) serves as cofactor.

It catalyses the reaction RNA(n) + a ribonucleoside 5'-triphosphate = RNA(n+1) + diphosphate. Its function is as follows. DNA-dependent RNA polymerase catalyzes the transcription of DNA into RNA using the four ribonucleoside triphosphates as substrates. This is DNA-directed RNA polymerase subunit beta' from Bacteroides fragilis (strain ATCC 25285 / DSM 2151 / CCUG 4856 / JCM 11019 / LMG 10263 / NCTC 9343 / Onslow / VPI 2553 / EN-2).